The following is a 31-amino-acid chain: Photosystem II reaction center protein T (31 aa).

A helical membrane pass occupies residues 3–23 (ALVYTFLLVTTLGILFFSIIF).

The protein belongs to the PsbT family. As to quaternary structure, PSII is composed of 1 copy each of membrane proteins PsbA, PsbB, PsbC, PsbD, PsbE, PsbF, PsbH, PsbI, PsbJ, PsbK, PsbL, PsbM, PsbT, PsbX, PsbY, PsbZ, Psb30/Ycf12, at least 3 peripheral proteins of the oxygen-evolving complex and a large number of cofactors. It forms dimeric complexes.

Its subcellular location is the plastid. The protein resides in the cyanelle thylakoid membrane. In terms of biological role, found at the monomer-monomer interface of the photosystem II (PS II) dimer, plays a role in assembly and dimerization of PSII. PSII is a light-driven water plastoquinone oxidoreductase, using light energy to abstract electrons from H(2)O, generating a proton gradient subsequently used for ATP formation. This is Photosystem II reaction center protein T from Cyanophora paradoxa.